The chain runs to 212 residues: Ribosomal RNA small subunit methyltransferase G (212 aa).

S-adenosyl-L-methionine-binding positions include Gly-80, Leu-85, 131–132 (AE), and Arg-146.

This sequence belongs to the methyltransferase superfamily. RNA methyltransferase RsmG family.

It is found in the cytoplasm. The enzyme catalyses guanosine(527) in 16S rRNA + S-adenosyl-L-methionine = N(7)-methylguanosine(527) in 16S rRNA + S-adenosyl-L-homocysteine. Functionally, specifically methylates the N7 position of guanine in position 527 of 16S rRNA. This Stenotrophomonas maltophilia (strain K279a) protein is Ribosomal RNA small subunit methyltransferase G.